Reading from the N-terminus, the 299-residue chain is Lipoyl synthase 2 (299 aa).

7 residues coordinate [4Fe-4S] cluster: C43, C48, C54, C69, C73, C76, and S294. The 229-residue stretch at 55–283 folds into the Radical SAM core domain; it reads YAAGTATFLL…GAVARDLGFA (229 aa).

The protein belongs to the radical SAM superfamily. Lipoyl synthase family. [4Fe-4S] cluster is required as a cofactor.

The protein resides in the cytoplasm. The catalysed reaction is [[Fe-S] cluster scaffold protein carrying a second [4Fe-4S](2+) cluster] + N(6)-octanoyl-L-lysyl-[protein] + 2 oxidized [2Fe-2S]-[ferredoxin] + 2 S-adenosyl-L-methionine + 4 H(+) = [[Fe-S] cluster scaffold protein] + N(6)-[(R)-dihydrolipoyl]-L-lysyl-[protein] + 4 Fe(3+) + 2 hydrogen sulfide + 2 5'-deoxyadenosine + 2 L-methionine + 2 reduced [2Fe-2S]-[ferredoxin]. It functions in the pathway protein modification; protein lipoylation via endogenous pathway; protein N(6)-(lipoyl)lysine from octanoyl-[acyl-carrier-protein]: step 2/2. Its function is as follows. Catalyzes the radical-mediated insertion of two sulfur atoms into the C-6 and C-8 positions of the octanoyl moiety bound to the lipoyl domains of lipoate-dependent enzymes, thereby converting the octanoylated domains into lipoylated derivatives. This chain is Lipoyl synthase 2, found in Parasynechococcus marenigrum (strain WH8102).